The following is a 180-amino-acid chain: Adenine phosphoribosyltransferase (180 aa).

This sequence belongs to the purine/pyrimidine phosphoribosyltransferase family. Homodimer.

It localises to the cytoplasm. It carries out the reaction AMP + diphosphate = 5-phospho-alpha-D-ribose 1-diphosphate + adenine. Its pathway is purine metabolism; AMP biosynthesis via salvage pathway; AMP from adenine: step 1/1. In terms of biological role, catalyzes a salvage reaction resulting in the formation of AMP, that is energically less costly than de novo synthesis. This chain is Adenine phosphoribosyltransferase, found in Marinobacter nauticus (strain ATCC 700491 / DSM 11845 / VT8) (Marinobacter aquaeolei).